The following is a 41-amino-acid chain: Competence-stimulating peptide type 1 (41 aa).

A propeptide spanning residues 1–24 (MKNTVKLEQFVALKEKDLQKIKGG) is cleaved from the precursor.

The protein belongs to the ComC family.

The protein localises to the secreted. Acts as a pheromone, induces cells to develop competence for genetic transformation. The protein is Competence-stimulating peptide type 1 (comC1) of Streptococcus pneumoniae.